Consider the following 1050-residue polypeptide: FHIP family protein GE18198 (1050 aa).

S498 and S805 each carry phosphoserine. 4 disordered regions span residues 800–827 (KGNEGSPMHHSQQQQMATNSGQQQGQLR), 865–888 (TSMFSRKSASNTSTTPPNGSSASS), 911–954 (TDGR…SGSN), and 968–995 (SNTTTHSASTLHGLDGGPSTGGFNSEPA). Residues 808–826 (HHSQQQQMATNSGQQQGQL) show a composition bias toward polar residues. Residues 872–888 (SASNTSTTPPNGSSASS) are compositionally biased toward low complexity. A compositionally biased stretch (polar residues) spans 918 to 935 (HAQTSAGTCETSLSTQPQ). The segment covering 941–954 (TGAIATSATASGSN) has biased composition (low complexity). Polar residues predominate over residues 968–977 (SNTTTHSAST).

It belongs to the FHIP family.

This Drosophila yakuba (Fruit fly) protein is FHIP family protein GE18198.